We begin with the raw amino-acid sequence, 1373 residues long: Ribonuclease 3 (1373 aa).

Disordered stretches follow at residues Met1–Pro99, Met119–Leu406, and Phe447–Ser496. Positions Pro47 to Ser69 are enriched in low complexity. 3 stretches are compositionally biased toward pro residues: residues Phe70 to Pro99, Met119 to Gly133, and Met144 to Met159. Low complexity-rich tracts occupy residues Pro160 to Pro169 and Asn185 to Pro200. Composition is skewed to basic and acidic residues over residues Gln214–Arg271, Arg278–Arg288, and Arg297–Arg312. Phosphoserine is present on residues Ser354 and Ser372. Composition is skewed to basic and acidic residues over residues Arg363–Lys398 and Phe447–Lys459. Positions Lys389 to Glu1364 are necessary for interaction with DGCR8 and pri-miRNA processing activity. Positions Glu474–Ser490 are enriched in acidic residues. Zn(2+) contacts are provided by Cys535, Cys537, His548, Cys560, His608, Cys675, and His679. RNase III domains are found at residues Leu875–Ser1055 and Leu1106–Asp1232. Glu968 serves as a coordination point for Mg(2+). A Zn(2+)-binding site is contributed by His1025. Mg(2+)-binding residues include Asn1041, Glu1044, Glu1146, Asp1218, and Glu1221. The DRBM domain maps to Asp1259 to Phe1333.

The protein belongs to the ribonuclease III family. Component of the microprocessor complex, or pri-miRNA processing protein complex, which is composed of DROSHA and DGCR8. The microprocessor complex is a heterotrimer; each of the two DROSHA RNase III domains binds one DGCR8 (via C-terminal region). Interacts with SP1 and SNIP1. Interacts with SRRT/ARS2. Interacts with CPSF3 and ISY1; this interaction is in an RNA dependent manner. Interacts with PUS10; interaction promotes pri-miRNAs processing. Mg(2+) is required as a cofactor. The cofactor is Mn(2+). In terms of processing, degraded by autophagy in response to neuronal activity in motor neurons. In terms of tissue distribution, expressed in motor neurons (at protein level).

The protein resides in the nucleus. It localises to the nucleolus. Its subcellular location is the cytoplasm. It carries out the reaction Endonucleolytic cleavage to 5'-phosphomonoester.. Ribonuclease III double-stranded (ds) RNA-specific endoribonuclease that is involved in the initial step of microRNA (miRNA) biogenesis. Component of the microprocessor complex that is required to process primary miRNA transcripts (pri-miRNAs) to release precursor miRNA (pre-miRNA) in the nucleus. Within the microprocessor complex, DROSHA cleaves the 3' and 5' strands of a stem-loop in pri-miRNAs (processing center 11 bp from the dsRNA-ssRNA junction) to release hairpin-shaped pre-miRNAs that are subsequently cut by the cytoplasmic DICER to generate mature miRNAs. Involved also in pre-rRNA processing. Cleaves double-strand RNA and does not cleave single-strand RNA. Involved in the formation of GW bodies. Plays a role in growth homeostasis in response to autophagy in motor neurons. This chain is Ribonuclease 3 (Drosha), found in Mus musculus (Mouse).